The following is a 430-amino-acid chain: Retinoic acid receptor RXR-alpha-A (430 aa).

Low complexity predominate over residues 1–20; it reads MHPSLLSPTSLGPSGSLHSP. Disordered stretches follow at residues 1 to 25 and 48 to 73; these read MHPS…STLS and ASPG…SSSE. The interval 1 to 99 is modulating; the sequence is MHPSLLSPTS…QPSGTPLSLT (99 aa). Residues 58–72 show a composition bias toward polar residues; the sequence is ISPQLNSHMNSVSSS. The segment at residues 100–175 is a DNA-binding region (nuclear receptor); that stretch reads KHICAICGDR…MGMKREAVQE (76 aa). Residues cysteine 103, cysteine 106, cysteine 120, and cysteine 123 each coordinate Zn(2+). Residues 103–123 form an NR C4-type zinc finger; that stretch reads CAICGDRSSGKHYGVYSCEGC. The tract at residues 128 to 133 is nuclear localization signal; sequence KRTVRK. Residues cysteine 139, cysteine 145, cysteine 155, and cysteine 158 each contribute to the Zn(2+) site. The NR C4-type zinc finger occupies 139–158; it reads CRDNKDCVIDKRQRNRCQYC. Basic and acidic residues predominate over residues 174 to 186; it reads QEERQRAKERSEN. Positions 174 to 196 are disordered; it reads QEERQRAKERSENEVESTSSANE. Residues 176–192 form a hinge region; sequence ERQRAKERSENEVESTS. The 232-residue stretch at 195 to 426 folds into the NR LBD domain; the sequence is NEDMPVEKIL…TFLMEMLEAP (232 aa). 9-cis-retinoate-binding residues include arginine 284 and alanine 295. 2 residues coordinate all-trans-retinoate: arginine 284 and alanine 295. The required for nuclear export stretch occupies residues 316–336; the sequence is RVLTELVSKMRDMQMDKTELG. The tract at residues 415–426 is AF-2; that stretch reads IDTFLMEMLEAP.

Belongs to the nuclear hormone receptor family. NR2 subfamily. As to quaternary structure, homodimer. Heterodimer; with a rar molecule. Binds DNA preferentially as a rar/rxr heterodimer.

The protein resides in the nucleus. Functionally, receptor for retinoic acid that acts as a transcription factor. Forms homo- or heterodimers with retinoic acid receptors (rars) and binds to target response elements in response to their ligands, all-trans or 9-cis retinoic acid, to regulate gene expression in various biological processes. The rar/rxr heterodimers bind to the retinoic acid response elements (RARE) composed of tandem 5'-AGGTCA-3' sites known as DR1-DR5 to regulate transcription. The high affinity ligand for rxrs is 9-cis retinoic acid. In the absence of ligand, the rar/rxr heterodimers associate with a multiprotein complex containing transcription corepressors that induce histone deacetylation, chromatin condensation and transcriptional suppression. On ligand binding, the corepressors dissociate from the receptors and coactivators are recruited leading to transcriptional activation. The protein is Retinoic acid receptor RXR-alpha-A of Danio rerio (Zebrafish).